The primary structure comprises 656 residues: Bifunctional protein ThiO/ThiG (656 aa).

The interval 1–395 (MQTTSDVLII…HAAENSEGSK (395 aa)) is thiO. Residues 7–21 (VLIIGGGIIGLAIAV) and 48–50 (AGM) contribute to the FAD site. Glu56 is a glycine binding site. Residue Val169 coordinates FAD. Residues Arg298 and Arg324 each coordinate glycine. FAD is bound at residue 322 to 328 (HYRNGIL). The segment at 396–656 (DLLEIAGRKF…ASSPLTGLVG (261 aa)) is thiG. The active-site Schiff-base intermediate with DXP is the Lys498. 1-deoxy-D-xylulose 5-phosphate is bound by residues Gly559, 585-586 (AG), and 607-608 (NS).

It in the N-terminal section; belongs to the DAO family. ThiO subfamily. The protein in the C-terminal section; belongs to the ThiG family. Interacts with ThiH and ThiS. FAD serves as cofactor.

Its subcellular location is the cytoplasm. It catalyses the reaction glycine + O2 + H2O = glyoxylate + H2O2 + NH4(+). It carries out the reaction [ThiS sulfur-carrier protein]-C-terminal-Gly-aminoethanethioate + 2-iminoacetate + 1-deoxy-D-xylulose 5-phosphate = [ThiS sulfur-carrier protein]-C-terminal Gly-Gly + 2-[(2R,5Z)-2-carboxy-4-methylthiazol-5(2H)-ylidene]ethyl phosphate + 2 H2O + H(+). Its pathway is cofactor biosynthesis; thiamine diphosphate biosynthesis. Functionally, catalyzes the FAD-dependent oxidative deamination of glycine. Is essential for thiamine biosynthesis since the oxidation of glycine catalyzed by ThiO generates the glycine imine intermediate (dehydroglycine) required for the biosynthesis of the thiazole ring of thiamine pyrophosphate. Catalyzes the rearrangement of 1-deoxy-D-xylulose 5-phosphate (DXP) to produce the thiazole phosphate moiety of thiamine. Sulfur is provided by the thiocarboxylate moiety of the carrier protein ThiS. In vitro, sulfur can be provided by H(2)S. This Synechocystis sp. (strain ATCC 27184 / PCC 6803 / Kazusa) protein is Bifunctional protein ThiO/ThiG (thiO/thiG).